The following is a 113-amino-acid chain: Putative membrane protein insertion efficiency factor (113 aa).

It belongs to the UPF0161 family.

The protein localises to the cell inner membrane. Could be involved in insertion of integral membrane proteins into the membrane. In Campylobacter jejuni subsp. doylei (strain ATCC BAA-1458 / RM4099 / 269.97), this protein is Putative membrane protein insertion efficiency factor.